The sequence spans 269 residues: MPGVETIKSSWADEVELDYGGLPPTTETVENGHKYVTEYKYNKDDKKTKVVRTYKISKQVVPKTVAKRRTWTKFGESKNDKPGPNSQTTMVSEEIIMQFLNSKEDEKANDPLLDPSKNIAKCRICNGEHWSVNCPYKGTAMDTNLMEKKAAAAASAAVDAPKSGKYVPPFLKDSQKGGMGMRGRDDTAAIRISNLSESMTEADLEELVKKIGPQSKMYLARDKNTGLCKGFAYVHFKQRKDAAAAIEILNGHGYDHLILSVEWSKPQNN.

The RRM domain maps to 188 to 266; it reads AAIRISNLSE…LILSVEWSKP (79 aa).

The protein belongs to the eIF-3 subunit G family. Component of the eukaryotic translation initiation factor 3 (eIF-3) complex. The eIF-3 complex interacts with pix.

The protein resides in the cytoplasm. Functionally, RNA-binding component of the eukaryotic translation initiation factor 3 (eIF-3) complex, which is involved in protein synthesis of a specialized repertoire of mRNAs and, together with other initiation factors, stimulates binding of mRNA and methionyl-tRNAi to the 40S ribosome. The eIF-3 complex specifically targets and initiates translation of a subset of mRNAs involved in cell proliferation. This subunit can bind 18S rRNA. The protein is Eukaryotic translation initiation factor 3 subunit G-1 of Drosophila willistoni (Fruit fly).